The sequence spans 611 residues: Alpha-1,2-mannosyltransferase ALG9 (611 aa).

Positions 1–10 (MASRGARQRL) are enriched in basic residues. The tract at residues 1 to 23 (MASRGARQRLKGSGASSGDTAPA) is disordered. Residues 1-135 (MASRGARQRL…FHARILQTNK (135 aa)) lie on the Lumenal side of the membrane. An N-linked (GlcNAc...) asparagine glycan is attached at asparagine 77. A helical transmembrane segment spans residues 136–156 (ILVFYFLRCLLAFVSCICELY). Over 157 to 171 (FYKAVCKKFGLHVSR) the chain is Cytoplasmic. A helical transmembrane segment spans residues 172-192 (MMLAFLVLSTGMFCSSSAFLP). The Lumenal segment spans residues 193 to 213 (SSFCMYTTLIAMTGWYMDKTS). The helical transmembrane segment at 214–234 (IAVLGVAAGAILGWPFSAALG) threads the bilayer. Topologically, residues 235–249 (LPIAFDLLVMKHRWK) are cytoplasmic. A helical transmembrane segment spans residues 250–270 (SFFHWSLMALILFLVPVVVID). Residues 271–304 (SYYYGKLVIAPLNIVLYNVFTPHGPDLYGTEPWY) are Lumenal-facing. Residues 305–325 (FYLINGFLNFNVAFALALLVL) form a helical membrane-spanning segment. At 326–342 (PLTSLMEYLLQRFHVQN) the chain is on the cytoplasmic side. Residues 343–363 (LGHPYWLTLAPMYIWFIIFFI) form a helical membrane-spanning segment. The Lumenal portion of the chain corresponds to 364–370 (QPHKEER). A helical membrane pass occupies residues 371-391 (FLFPVYPLICLCGAVALSALQ). The Cytoplasmic segment spans residues 392–405 (KCYHFVFQRYRLEH). Residues 406–426 (YTVTSNWLALGTVFLFGLLSF) form a helical membrane-spanning segment. The Lumenal segment spans residues 427–611 (SRSVALFRGY…AKQIRKKSGG (185 aa)). N-linked (GlcNAc...) asparagine glycosylation is present at asparagine 593.

Belongs to the glycosyltransferase 22 family. Ubiquitously expressed; with highest levels in heart, liver and pancreas.

It localises to the endoplasmic reticulum membrane. The catalysed reaction is an alpha-D-Man-(1-&gt;2)-alpha-D-Man-(1-&gt;2)-alpha-D-Man-(1-&gt;3)-[alpha-D-Man-(1-&gt;3)-alpha-D-Man-(1-&gt;6)]-beta-D-Man-(1-&gt;4)-beta-D-GlcNAc-(1-&gt;4)-alpha-D-GlcNAc-diphospho-di-trans,poly-cis-dolichol + a di-trans,poly-cis-dolichyl beta-D-mannosyl phosphate = an alpha-D-Man-(1-&gt;2)-alpha-D-Man-(1-&gt;2)-alpha-D-Man-(1-&gt;3)-[alpha-D-Man-(1-&gt;2)-alpha-D-Man-(1-&gt;3)-alpha-D-Man-(1-&gt;6)]-beta-D-Man-(1-&gt;4)-beta-D-GlcNAc-(1-&gt;4)-alpha-D-GlcNAc-diphospho-di-trans,poly-cis-dolichol + a di-trans,poly-cis-dolichyl phosphate + H(+). It carries out the reaction an alpha-D-Man-(1-&gt;2)-alpha-D-Man-(1-&gt;2)-alpha-D-Man-(1-&gt;3)-[alpha-D-Man-(1-&gt;2)-alpha-D-Man-(1-&gt;3)-[alpha-D-Man-(1-&gt;6)]-alpha-D-Man-(1-&gt;6)]-beta-D-Man-(1-&gt;4)-beta-D-GlcNAc-(1-&gt;4)-alpha-D-GlcNAc-diphospho-di-trans,poly-cis-dolichol + a di-trans,poly-cis-dolichyl beta-D-mannosyl phosphate = an alpha-D-Man-(1-&gt;2)-alpha-D-Man-(1-&gt;2)-alpha-D-Man-(1-&gt;3)-[alpha-D-Man-(1-&gt;2)-alpha-D-Man-(1-&gt;3)-[alpha-D-Man-(1-&gt;2)-alpha-D-Man-(1-&gt;6)]-alpha-D-Man-(1-&gt;6)]-beta-D-Man-(1-&gt;4)-beta-D-GlcNAc-(1-&gt;4)-alpha-D-GlcNAc-diphospho-di-trans,poly-cis-dolichol + a di-trans,poly-cis-dolichyl phosphate + H(+). It participates in protein modification; protein glycosylation. In terms of biological role, mannosyltransferase that operates in the biosynthetic pathway of dolichol-linked oligosaccharides, the glycan precursors employed in protein asparagine (N)-glycosylation. The assembly of dolichol-linked oligosaccharides begins on the cytosolic side of the endoplasmic reticulum membrane and finishes in its lumen. The sequential addition of sugars to dolichol pyrophosphate produces dolichol-linked oligosaccharides containing fourteen sugars, including two GlcNAcs, nine mannoses and three glucoses. Once assembled, the oligosaccharide is transferred from the lipid to nascent proteins by oligosaccharyltransferases. In the lumen of the endoplasmic reticulum, catalyzes the addition of the seventh and ninth alpha-1,2-linked mannose residues to Man(6)GlcNAc(2)-PP-dolichol and Man(8)GlcNAc(2)-PP-dolichol respectively. In Homo sapiens (Human), this protein is Alpha-1,2-mannosyltransferase ALG9.